Consider the following 347-residue polypeptide: GTPase Obg (347 aa).

The Obg domain occupies 1–159 (MQFLDQAKIY…AWVWLRLKLL (159 aa)). Residues 124–144 (GRGNASYKSSTNRAPRQHGPG) form a disordered region. Positions 160–327 (ADVGLVGLPN…ILDQLITMTG (168 aa)) constitute an OBG-type G domain. GTP is bound by residues 166–173 (GLPNAGKS), 191–195 (FTTLH), 212–215 (DIPG), 279–282 (NKID), and 308–310 (SGA). Mg(2+) contacts are provided by Ser173 and Thr193.

Belongs to the TRAFAC class OBG-HflX-like GTPase superfamily. OBG GTPase family. As to quaternary structure, monomer. Mg(2+) is required as a cofactor.

Its subcellular location is the cytoplasm. In terms of biological role, an essential GTPase which binds GTP, GDP and possibly (p)ppGpp with moderate affinity, with high nucleotide exchange rates and a fairly low GTP hydrolysis rate. Plays a role in control of the cell cycle, stress response, ribosome biogenesis and in those bacteria that undergo differentiation, in morphogenesis control. In Zymomonas mobilis subsp. mobilis (strain ATCC 31821 / ZM4 / CP4), this protein is GTPase Obg.